Reading from the N-terminus, the 158-residue chain is NAD(P)H-quinone oxidoreductase subunit J, chloroplastic (158 aa).

This sequence belongs to the complex I 30 kDa subunit family. NDH is composed of at least 16 different subunits, 5 of which are encoded in the nucleus.

The protein localises to the plastid. The protein resides in the chloroplast thylakoid membrane. It catalyses the reaction a plastoquinone + NADH + (n+1) H(+)(in) = a plastoquinol + NAD(+) + n H(+)(out). The enzyme catalyses a plastoquinone + NADPH + (n+1) H(+)(in) = a plastoquinol + NADP(+) + n H(+)(out). Its function is as follows. NDH shuttles electrons from NAD(P)H:plastoquinone, via FMN and iron-sulfur (Fe-S) centers, to quinones in the photosynthetic chain and possibly in a chloroplast respiratory chain. The immediate electron acceptor for the enzyme in this species is believed to be plastoquinone. Couples the redox reaction to proton translocation, and thus conserves the redox energy in a proton gradient. This Lupinus luteus (European yellow lupine) protein is NAD(P)H-quinone oxidoreductase subunit J, chloroplastic.